Here is a 163-residue protein sequence, read N- to C-terminus: UPF0260 protein GOX1406 (163 aa).

This sequence belongs to the UPF0260 family.

In Gluconobacter oxydans (strain 621H) (Gluconobacter suboxydans), this protein is UPF0260 protein GOX1406.